Here is a 272-residue protein sequence, read N- to C-terminus: Cell division protein FtsQ (272 aa).

Residues 1 to 20 (MSSYAPREIPLDIRLMQGTS) are Cytoplasmic-facing. The helical transmembrane segment at 21–40 (RALFWLVALGCLFVAGHWLM) threads the bilayer. Over 41–272 (QRNWWDIRAV…KTPQPAGRKD (232 aa)) the chain is Periplasmic. Positions 45–114 (WDIRAVRLQG…MQLAVTLQAQ (70 aa)) constitute a POTRA domain.

It belongs to the FtsQ/DivIB family. FtsQ subfamily. In terms of assembly, part of a complex composed of FtsB, FtsL and FtsQ.

Its subcellular location is the cell inner membrane. Essential cell division protein. May link together the upstream cell division proteins, which are predominantly cytoplasmic, with the downstream cell division proteins, which are predominantly periplasmic. May control correct divisome assembly. In Thiomonas arsenitoxydans (strain DSM 22701 / CIP 110005 / 3As), this protein is Cell division protein FtsQ.